A 342-amino-acid chain; its full sequence is Thymidylate synthase (342 aa).

DUMP contacts are provided by residues R31 and 156-157 (RR). C176 (nucleophile) is an active-site residue. Residues 196 to 199 (RSGD), N207, and 237 to 239 (HVY) each bind dUMP. D199 provides a ligand contact to (6R)-5,10-methylene-5,6,7,8-tetrahydrofolate. A341 provides a ligand contact to (6R)-5,10-methylene-5,6,7,8-tetrahydrofolate.

The protein belongs to the thymidylate synthase family. Bacterial-type ThyA subfamily. In terms of assembly, homodimer.

It localises to the cytoplasm. It carries out the reaction dUMP + (6R)-5,10-methylene-5,6,7,8-tetrahydrofolate = 7,8-dihydrofolate + dTMP. The protein operates within pyrimidine metabolism; dTTP biosynthesis. Functionally, catalyzes the reductive methylation of 2'-deoxyuridine-5'-monophosphate (dUMP) to 2'-deoxythymidine-5'-monophosphate (dTMP) while utilizing 5,10-methylenetetrahydrofolate (mTHF) as the methyl donor and reductant in the reaction, yielding dihydrofolate (DHF) as a by-product. This enzymatic reaction provides an intracellular de novo source of dTMP, an essential precursor for DNA biosynthesis. This is Thymidylate synthase from Haloferax volcanii (Halobacterium volcanii).